A 400-amino-acid chain; its full sequence is Imidazolonepropionase (400 aa).

Fe(3+) is bound by residues His70 and His72. Positions 70 and 72 each coordinate Zn(2+). 4-imidazolone-5-propanoate contacts are provided by Arg79, Tyr142, and His175. Tyr142 contributes to the N-formimidoyl-L-glutamate binding site. His239 lines the Fe(3+) pocket. His239 lines the Zn(2+) pocket. Position 242 (Gln242) interacts with 4-imidazolone-5-propanoate. Asp314 lines the Fe(3+) pocket. Asp314 is a Zn(2+) binding site. Asn316 and Gly318 together coordinate N-formimidoyl-L-glutamate. 4-imidazolone-5-propanoate is bound at residue Thr319.

The protein belongs to the metallo-dependent hydrolases superfamily. HutI family. Zn(2+) is required as a cofactor. Fe(3+) serves as cofactor.

It is found in the cytoplasm. It carries out the reaction 4-imidazolone-5-propanoate + H2O = N-formimidoyl-L-glutamate. It functions in the pathway amino-acid degradation; L-histidine degradation into L-glutamate; N-formimidoyl-L-glutamate from L-histidine: step 3/3. Its function is as follows. Catalyzes the hydrolytic cleavage of the carbon-nitrogen bond in imidazolone-5-propanoate to yield N-formimidoyl-L-glutamate. It is the third step in the universal histidine degradation pathway. The protein is Imidazolonepropionase of Methylobacterium nodulans (strain LMG 21967 / CNCM I-2342 / ORS 2060).